Here is a 303-residue protein sequence, read N- to C-terminus: Glycine--tRNA ligase alpha subunit (303 aa).

This sequence belongs to the class-II aminoacyl-tRNA synthetase family. In terms of assembly, tetramer of two alpha and two beta subunits.

It is found in the cytoplasm. The enzyme catalyses tRNA(Gly) + glycine + ATP = glycyl-tRNA(Gly) + AMP + diphosphate. This chain is Glycine--tRNA ligase alpha subunit, found in Klebsiella pneumoniae subsp. pneumoniae (strain ATCC 700721 / MGH 78578).